The following is a 411-amino-acid chain: ATPase family AAA domain-containing protein 3C (411 aa).

Residue 177 to 184 (GPPGTGKT) participates in ATP binding.

Belongs to the AAA ATPase family.

The chain is ATPase family AAA domain-containing protein 3C (ATAD3C) from Homo sapiens (Human).